The primary structure comprises 1390 residues: Bromodomain adjacent to zinc finger domain protein 2 (1390 aa).

Disordered stretches follow at residues 30–67 (AKIQ…QNEA), 178–215 (AKKK…AANN), and 235–269 (QKQQ…DVKN). Polar residues predominate over residues 35-45 (ATASSPSKSTN). 2 stretches are compositionally biased toward low complexity: residues 46–63 (GTSA…TSSS) and 186–215 (ASTS…AANN). Over residues 243-269 (DTQKKADQAKKAKELAKQQQKEQDVKN) the composition is skewed to basic and acidic residues. The 73-residue stretch at 323-395 (KTNEAMLRLP…DNFLFNTKLV (73 aa)) folds into the MBD domain. The region spanning 524 to 588 (SQGFADALMV…LRLALEFPGM (65 aa)) is the DDT domain. A compositionally biased stretch (basic and acidic residues) spans 705–724 (KEEQNHESDSEPPTRPDTPK). The interval 705-729 (KEEQNHESDSEPPTRPDTPKKATVA) is disordered. The PHD-type zinc-finger motif lies at 1100–1149 (EALCQICKSMDGDEMLVCDGCESGCHMECFRPRMTKVPEGDWFCQRCREE). The segment at 1218 to 1241 (EERELEDDNHAENGENTKNGHMNG) is disordered. The Bromo domain occupies 1273-1377 (LPKNMNKELC…KFFQKRWKQL (105 aa)).

This sequence belongs to the WAL family. As to quaternary structure, interacts with set-6. As to expression, broadly expressed in the nervous system, including head, body and tail neurons.

It localises to the nucleus. The protein resides in the chromosome. Its function is as follows. Chromatin reader protein, involved in positively modulating the rate of age-related behavioral deterioration. Positively modulates the level of global trimethylated 'Lys-9' of histone H3 (H3K9me3), but not of H3K9me2 or H3K9me1. May repress the expression of mitochondrial function-related genes by occupying their promoter regions, working in concert with histone methyltransferase, set-6. Involved in modulation of the mitochondrial unfolded protein response (UPR). Negatively regulates expression of bas-1, a serotonin (5-HT) and dopamine synthesizing enzyme (DOPA decarboxylase), with aging. Negatively modulates levels of endogenous 5-HT and dopamine with aging. Involved in modulating longevity, probably as a result of enhanced stress resistance via mechanisms related to dietary restriction and mitochondrial function. This is Bromodomain adjacent to zinc finger domain protein 2 from Caenorhabditis elegans.